Reading from the N-terminus, the 134-residue chain is Proline-rich protein 4 (134 aa).

Positions 1–16 (MLLVLLSVVLLALSSA) are cleaved as a signal peptide. Residues 28-134 (FTFTIPDVED…ARHPQEQPLW (107 aa)) are disordered. Residues 47-59 (QRPPPEGLLPRPP) are compositionally biased toward pro residues. Over residues 110 to 119 (VSLQEASSFF) the composition is skewed to polar residues. Residues 120–134 (QRDRPARHPQEQPLW) show a composition bias toward basic and acidic residues.

As to expression, abundantly expressed in lacrimal gland where it is found in the acinar cells but not in the intralobular ducts. Also found in the submandibular gland, the parotid and sublingual glands.

It localises to the secreted. The chain is Proline-rich protein 4 (PRR4) from Homo sapiens (Human).